We begin with the raw amino-acid sequence, 91 residues long: Cell division topological specificity factor (91 aa).

This sequence belongs to the MinE family.

Its function is as follows. Prevents the cell division inhibition by proteins MinC and MinD at internal division sites while permitting inhibition at polar sites. This ensures cell division at the proper site by restricting the formation of a division septum at the midpoint of the long axis of the cell. The chain is Cell division topological specificity factor from Wigglesworthia glossinidia brevipalpis.